The chain runs to 162 residues: CASP-like protein 1C1 (162 aa).

The Cytoplasmic segment spans residues 1–7 (MAKLHRL). A helical transmembrane segment spans residues 8–28 (ISAVLRLAAAGAAAAAAIIMV). At 29-50 (TSHETTSFFGIEMEAKYSYTPS) the chain is on the extracellular side. A helical membrane pass occupies residues 51 to 71 (FVFFVVAFAVAFAYSLLALLA). Topologically, residues 72-79 (RPGSTASR) are cytoplasmic. A helical membrane pass occupies residues 80–100 (LLLLSDVMVGMLLTGAVAATG). Topologically, residues 101-128 (AISQVGKSGNEHAGWLPICAQVQAYCSH) are extracellular. A helical membrane pass occupies residues 129-149 (VMGALIAGFVSLLLYFLIIMY). Over 150-162 (SLHAVAEPLCSCH) the chain is Cytoplasmic.

It belongs to the Casparian strip membrane proteins (CASP) family. In terms of assembly, homodimer and heterodimers.

The protein localises to the cell membrane. This chain is CASP-like protein 1C1, found in Sorghum bicolor (Sorghum).